Consider the following 107-residue polypeptide: Putative double-stranded DNA mimic protein YE2228 (107 aa).

This sequence belongs to the putative dsDNA mimic protein family.

Its function is as follows. May act as a double-stranded DNA (dsDNA) mimic. Probably regulates the activity of a dsDNA-binding protein. This chain is Putative double-stranded DNA mimic protein YE2228, found in Yersinia enterocolitica serotype O:8 / biotype 1B (strain NCTC 13174 / 8081).